The primary structure comprises 147 residues: 3-hydroxyacyl-[acyl-carrier-protein] dehydratase FabZ (147 aa).

His-50 is an active-site residue.

The protein belongs to the thioester dehydratase family. FabZ subfamily.

The protein localises to the cytoplasm. It carries out the reaction a (3R)-hydroxyacyl-[ACP] = a (2E)-enoyl-[ACP] + H2O. Involved in unsaturated fatty acids biosynthesis. Catalyzes the dehydration of short chain beta-hydroxyacyl-ACPs and long chain saturated and unsaturated beta-hydroxyacyl-ACPs. This Lactiplantibacillus plantarum (strain ATCC BAA-793 / NCIMB 8826 / WCFS1) (Lactobacillus plantarum) protein is 3-hydroxyacyl-[acyl-carrier-protein] dehydratase FabZ.